A 417-amino-acid polypeptide reads, in one-letter code: UDP-N-acetylglucosamine 1-carboxyvinyltransferase (417 aa).

22-23 (KN) is a binding site for phosphoenolpyruvate. Residue R93 participates in UDP-N-acetyl-alpha-D-glucosamine binding. C117 functions as the Proton donor in the catalytic mechanism. The residue at position 117 (C117) is a 2-(S-cysteinyl)pyruvic acid O-phosphothioketal. UDP-N-acetyl-alpha-D-glucosamine is bound by residues 122–126 (RPVDL), D305, and I327.

This sequence belongs to the EPSP synthase family. MurA subfamily.

It localises to the cytoplasm. It carries out the reaction phosphoenolpyruvate + UDP-N-acetyl-alpha-D-glucosamine = UDP-N-acetyl-3-O-(1-carboxyvinyl)-alpha-D-glucosamine + phosphate. It functions in the pathway cell wall biogenesis; peptidoglycan biosynthesis. In terms of biological role, cell wall formation. Adds enolpyruvyl to UDP-N-acetylglucosamine. The chain is UDP-N-acetylglucosamine 1-carboxyvinyltransferase from Thiobacillus denitrificans (strain ATCC 25259 / T1).